A 209-amino-acid chain; its full sequence is Kynurenine formamidase (209 aa).

Phe-19 serves as a coordination point for substrate. Residues His-49, His-53, and Asp-55 each contribute to the Zn(2+) site. The active-site Proton donor/acceptor is the His-59. Zn(2+) is bound by residues His-160 and Glu-172.

Belongs to the Cyclase 1 superfamily. KynB family. As to quaternary structure, homodimer. Zn(2+) serves as cofactor.

It catalyses the reaction N-formyl-L-kynurenine + H2O = L-kynurenine + formate + H(+). Its pathway is amino-acid degradation; L-tryptophan degradation via kynurenine pathway; L-kynurenine from L-tryptophan: step 2/2. Its function is as follows. Catalyzes the hydrolysis of N-formyl-L-kynurenine to L-kynurenine, the second step in the kynurenine pathway of tryptophan degradation. This chain is Kynurenine formamidase, found in Delftia acidovorans (strain DSM 14801 / SPH-1).